Reading from the N-terminus, the 583-residue chain is Atlastin-2 (583 aa).

The segment at 1-44 (MAEGDEAARGQQPHQGLWRRRRTSDPSAAVNHVSSTTSLGENYE) is disordered. The interval 1 to 60 (MAEGDEAARGQQPHQGLWRRRRTSDPSAAVNHVSSTTSLGENYEDDDLVNSDEVMKKPCP) is N-terminal hypervariable region (HVR). The Cytoplasmic portion of the chain corresponds to 1 to 476 (MAEGDEAARG…NIFYAARTPA (476 aa)). Position 24 is a phosphoserine (Ser24). One can recognise a GB1/RHD3-type G domain in the interval 91–336 (DLNIVVVSVA…LVPLLLAPEN (246 aa)). Residues Arg104, Lys105, Gly106, Lys107, Ser108, Phe109, Gln175, Arg244, and Asp245 each contribute to the GDP site. Positions 104, 105, 106, 107, 108, and 109 each coordinate GTP. A Mg(2+)-binding site is contributed by Ser108. 2 residues coordinate GTP: Arg244 and Asp245. Residues 256–284 (LEGGKQFLEKRLQVKQNQHEELQNVRKHI) adopt a coiled-coil conformation. Lys270 carries the post-translational modification N6-methyllysine. GDP is bound by residues Val303 and Asn306. Val303 provides a ligand contact to GTP. The tract at residues 374–465 (MLQATAEANN…YANFIKHNDG (92 aa)) is 3HB (three-helix bundle) domain. The tract at residues 466–474 (KNIFYAART) is linker. A helical transmembrane segment spans residues 477 to 497 (TLFAVMFAMYIISGLTGFIGL). Over 498 to 499 (NS) the chain is Lumenal. The helical transmembrane segment at 500-520 (IAVLCNLVMGLALIFLCTWAY) threads the bilayer. Residues 521-583 (VKYSGEFREI…VSHHARLKTD (63 aa)) lie on the Cytoplasmic side of the membrane. The segment at 547 to 583 (KPLGDNLMEENIRQSVTNSIKAGLTDQVSHHARLKTD) is autoinhibitory domain.

The protein belongs to the TRAFAC class dynamin-like GTPase superfamily. GB1/RHD3 GTPase family. GB1 subfamily. As to quaternary structure, monomeric and homodimeric. The homodimer, transiently formed by two molecules on opposing membranes, is the active form mediating ER membrane fusion. Interacts with REEP5 and RTN3; these proteins are involved in endoplasmic reticulum tubular network organization. Interacts with ZFYVE27; both proteins are involved in endoplasmic reticulum tubular network organization. As to expression, expressed in peripheral tissues (at protein level).

The protein resides in the endoplasmic reticulum membrane. It carries out the reaction GTP + H2O = GDP + phosphate + H(+). Its activity is regulated as follows. With its alternative C-terminus disrupting the autoinhibitory domain, this brain-specific isoform is probably more active at fusing ER membranes. Functionally, atlastin-2 (ATL2) is a membrane-anchored GTPase that mediates the GTP-dependent fusion of endoplasmic reticulum (ER) membranes, maintaining the continuous ER network. It facilitates the formation of three-way junctions where ER tubules intersect. Two atlastin-2 on neighboring ER tubules bind GTP and form loose homodimers through the GB1/RHD3-type G domains and 3HB regions. Upon GTP hydrolysis, the 3HB regions tighten, pulling the membranes together to drive their fusion. After fusion, the homodimer disassembles upon release of inorganic phosphate (Pi). Subsequently, GDP dissociates, resetting the monomers to a conformation ready for a new fusion cycle. The chain is Atlastin-2 from Homo sapiens (Human).